Consider the following 398-residue polypeptide: Acetate kinase (398 aa).

A Mg(2+)-binding site is contributed by Asn-9. Residue Lys-16 participates in ATP binding. Arg-90 contributes to the substrate binding site. Asp-147 (proton donor/acceptor) is an active-site residue. ATP is bound by residues 207-211, 282-284, and 330-334; these read HIGNG, DLR, and GVGEN. A Mg(2+)-binding site is contributed by Glu-384.

Belongs to the acetokinase family. Homodimer. Mg(2+) is required as a cofactor. Mn(2+) serves as cofactor.

Its subcellular location is the cytoplasm. It carries out the reaction acetate + ATP = acetyl phosphate + ADP. It participates in metabolic intermediate biosynthesis; acetyl-CoA biosynthesis; acetyl-CoA from acetate: step 1/2. Catalyzes the formation of acetyl phosphate from acetate and ATP. Can also catalyze the reverse reaction. The sequence is that of Acetate kinase from Staphylococcus haemolyticus (strain JCSC1435).